Here is a 511-residue protein sequence, read N- to C-terminus: Chromosomal replication initiator protein DnaA (511 aa).

Positions 1-87 are domain I, interacts with DnaA modulators; the sequence is MSVELWQQCV…IGSKRSSAPR (87 aa). Positions 87–174 are domain II; the sequence is RAAPNAPLAA…QVEGALKHTS (88 aa). Positions 133–160 are disordered; that stretch reads VATHDEPSRDSFDPMAGASSQQAPARAE. The span at 134–144 shows a compositional bias: basic and acidic residues; sequence ATHDEPSRDSF. A domain III, AAA+ region region spans residues 175-391; sequence YLNRTFTFEN…GALKRVIAHS (217 aa). ATP-binding residues include Gly219, Gly221, Lys222, and Thr223. The tract at residues 392–511 is domain IV, binds dsDNA; sequence HFMGRDITIE…YKNLLRTLTT (120 aa).

This sequence belongs to the DnaA family. In terms of assembly, oligomerizes as a right-handed, spiral filament on DNA at oriC.

The protein localises to the cytoplasm. In terms of biological role, plays an essential role in the initiation and regulation of chromosomal replication. ATP-DnaA binds to the origin of replication (oriC) to initiate formation of the DNA replication initiation complex once per cell cycle. Binds the DnaA box (a 9 base pair repeat at the origin) and separates the double-stranded (ds)DNA. Forms a right-handed helical filament on oriC DNA; dsDNA binds to the exterior of the filament while single-stranded (ss)DNA is stabiized in the filament's interior. The ATP-DnaA-oriC complex binds and stabilizes one strand of the AT-rich DNA unwinding element (DUE), permitting loading of DNA polymerase. After initiation quickly degrades to an ADP-DnaA complex that is not apt for DNA replication. Binds acidic phospholipids. This Pseudomonas syringae pv. tomato (strain ATCC BAA-871 / DC3000) protein is Chromosomal replication initiator protein DnaA.